A 318-amino-acid chain; its full sequence is MIEIWTEKYRPKSLSEIYGEDENIQKLKSFVEKKELPHLLFAGSVGTGKTSTAIALAIELFGESWKENFIEMNASNENGIDVIRNKIKDIARIRPSNPLGFKILFLDEADQLTAEAQAALRRTMEMYSETTRFVFACNYSSKIIPPIQSRTVVMRFRPVQDEFIKKKLNEIAKNEGFTIDDESMEAMVEVSGGDMRKAINVLQAVYTSGEISPKKIYEIIGYASPESVNKLISRAINGLFDEARQIVDKMMIEDGLSGIDIVKSVHSIVRASVVPPKQKIEIIKALADAEFRIVEGSNDRIQLDALIARIADIGSKIN.

43–50 lines the ATP pocket; that stretch reads GSVGTGKT.

This sequence belongs to the activator 1 small subunits family. RfcS subfamily. As to quaternary structure, heteromultimer composed of small subunits (RfcS) and large subunits (RfcL).

Its function is as follows. Part of the RFC clamp loader complex which loads the PCNA sliding clamp onto DNA. This is Replication factor C small subunit from Thermoplasma volcanium (strain ATCC 51530 / DSM 4299 / JCM 9571 / NBRC 15438 / GSS1).